A 568-amino-acid chain; its full sequence is Estrogen receptor beta (568 aa).

Residues 1-177 (MHQQSPVDDV…SLRGKADMHY (177 aa)) are modulating. 2 NR C4-type zinc fingers span residues 178–198 (CAVC…CEGC) and 214–238 (CPAT…LRKC). The nuclear receptor DNA-binding region spans 178–243 (CAVCSDYASG…RLRKCYEVGM (66 aa)). Residues 300–536 (TPEELIARIM…DLLLEMLDAH (237 aa)) enclose the NR LBD domain.

Belongs to the nuclear hormone receptor family. NR3 subfamily. As to quaternary structure, binds DNA as a homodimer. Can form a heterodimer with ER-alpha.

Its subcellular location is the nucleus. Binds estrogens with an affinity similar to that of ER-alpha, and activates expression of reporter genes containing estrogen response elements (ERE) in an estrogen-dependent manner. The protein is Estrogen receptor beta (esr2) of Oncorhynchus mykiss (Rainbow trout).